We begin with the raw amino-acid sequence, 899 residues long: AP-3 complex subunit delta (899 aa).

12 HEAT repeats span residues 37–74 (QSPE…KLTY), 155–192 (ELAR…QYPE), 194–229 (LRDN…HNPQ), 231–267 (FIQL…IEPK), 268–305 (LRVK…LNSD), 308–344 (DSAV…KINT), 345–382 (DFIA…EDNL), 384–428 (DFVQ…ITAM), 480–518 (RTLA…LLDN), 536–580 (ELQQ…LIIS), 590–613 (SEAL…SLPL), and 614–656 (LLTE…TESE). Disordered regions lie at residues 668–701 (DGIV…PTHE), 741–768 (NLSN…KKKK), 782–801 (GVNT…SARN), and 849–899 (AAEE…LTTE). Residues 743–759 (SNSKPSSSGSLVRLSSE) are compositionally biased toward low complexity. Residues 841–862 (QRLLDESAAAEEEVVVVKKKKR) adopt a coiled-coil conformation. Positions 857–880 (VKKKKRSKDGSKSSKKKSRSKSKP) are enriched in basic residues.

The protein belongs to the adaptor complexes large subunit family. As to quaternary structure, adaptor protein complex 3 (AP-3) is a heterotetramer composed of 2 large adaptins (APL5 and APL6), a medium adaptin (APM3) and a small adaptin (APS3).

It localises to the golgi apparatus. The protein resides in the cytoplasmic vesicle. It is found in the clathrin-coated vesicle membrane. In terms of biological role, part of the AP-3 complex, an adaptor-related complex which is not clathrin-associated. The complex is associated with the Golgi region as well as more peripheral structures. It facilitates the budding of vesicles from the Golgi membrane and may be directly involved in trafficking to the vacuole. The chain is AP-3 complex subunit delta (APL5) from Eremothecium gossypii (strain ATCC 10895 / CBS 109.51 / FGSC 9923 / NRRL Y-1056) (Yeast).